The primary structure comprises 252 residues: MRRYFIYLGYNGKNFRGWQIQPNGMTVQQSIEEALAILMRTPVPIVGAGRTDAGVHAHLMIAHFDWEEPIGDLVFLAEKLNRLLPKDIAVYKIVPVVPEAHARFDATSRTYKYYVTTKKDPFNHELVYKLPGRLDFEAMNEACKVLFDYIDFTSFSKLHTDVKTNNCHIQHAGWTQEGDIWVFTIRADRFLRNMVRAIVGTLLEVGRGRLTIDGFRNVIEAKDRCKAGTSVPGHALFLVDVTYPEELFPVED.

D52 acts as the Nucleophile in catalysis. Residue Y111 participates in substrate binding.

This sequence belongs to the tRNA pseudouridine synthase TruA family. As to quaternary structure, homodimer.

The enzyme catalyses uridine(38/39/40) in tRNA = pseudouridine(38/39/40) in tRNA. In terms of biological role, formation of pseudouridine at positions 38, 39 and 40 in the anticodon stem and loop of transfer RNAs. In Parabacteroides distasonis (strain ATCC 8503 / DSM 20701 / CIP 104284 / JCM 5825 / NCTC 11152), this protein is tRNA pseudouridine synthase A.